Reading from the N-terminus, the 314-residue chain is 4-hydroxy-3-methylbut-2-enyl diphosphate reductase (314 aa).

[4Fe-4S] cluster is bound at residue C12. (2E)-4-hydroxy-3-methylbut-2-enyl diphosphate-binding residues include H41 and H74. Dimethylallyl diphosphate-binding residues include H41 and H74. Isopentenyl diphosphate contacts are provided by H41 and H74. Position 96 (C96) interacts with [4Fe-4S] cluster. H124 is a binding site for (2E)-4-hydroxy-3-methylbut-2-enyl diphosphate. H124 contributes to the dimethylallyl diphosphate binding site. Isopentenyl diphosphate is bound at residue H124. Catalysis depends on E126, which acts as the Proton donor. A (2E)-4-hydroxy-3-methylbut-2-enyl diphosphate-binding site is contributed by T167. C197 provides a ligand contact to [4Fe-4S] cluster. (2E)-4-hydroxy-3-methylbut-2-enyl diphosphate-binding residues include S225, S226, N227, and S269. 4 residues coordinate dimethylallyl diphosphate: S225, S226, N227, and S269. 4 residues coordinate isopentenyl diphosphate: S225, S226, N227, and S269.

Belongs to the IspH family. [4Fe-4S] cluster serves as cofactor.

The enzyme catalyses isopentenyl diphosphate + 2 oxidized [2Fe-2S]-[ferredoxin] + H2O = (2E)-4-hydroxy-3-methylbut-2-enyl diphosphate + 2 reduced [2Fe-2S]-[ferredoxin] + 2 H(+). It catalyses the reaction dimethylallyl diphosphate + 2 oxidized [2Fe-2S]-[ferredoxin] + H2O = (2E)-4-hydroxy-3-methylbut-2-enyl diphosphate + 2 reduced [2Fe-2S]-[ferredoxin] + 2 H(+). It functions in the pathway isoprenoid biosynthesis; dimethylallyl diphosphate biosynthesis; dimethylallyl diphosphate from (2E)-4-hydroxy-3-methylbutenyl diphosphate: step 1/1. The protein operates within isoprenoid biosynthesis; isopentenyl diphosphate biosynthesis via DXP pathway; isopentenyl diphosphate from 1-deoxy-D-xylulose 5-phosphate: step 6/6. Catalyzes the conversion of 1-hydroxy-2-methyl-2-(E)-butenyl 4-diphosphate (HMBPP) into a mixture of isopentenyl diphosphate (IPP) and dimethylallyl diphosphate (DMAPP). Acts in the terminal step of the DOXP/MEP pathway for isoprenoid precursor biosynthesis. In Actinobacillus pleuropneumoniae serotype 5b (strain L20), this protein is 4-hydroxy-3-methylbut-2-enyl diphosphate reductase.